We begin with the raw amino-acid sequence, 146 residues long: D-aminoacyl-tRNA deacylase (146 aa).

Positions 138-139 (GP) match the Gly-cisPro motif, important for rejection of L-amino acids motif.

This sequence belongs to the DTD family. In terms of assembly, homodimer.

Its subcellular location is the cytoplasm. It catalyses the reaction glycyl-tRNA(Ala) + H2O = tRNA(Ala) + glycine + H(+). The catalysed reaction is a D-aminoacyl-tRNA + H2O = a tRNA + a D-alpha-amino acid + H(+). Functionally, an aminoacyl-tRNA editing enzyme that deacylates mischarged D-aminoacyl-tRNAs. Also deacylates mischarged glycyl-tRNA(Ala), protecting cells against glycine mischarging by AlaRS. Acts via tRNA-based rather than protein-based catalysis; rejects L-amino acids rather than detecting D-amino acids in the active site. By recycling D-aminoacyl-tRNA to D-amino acids and free tRNA molecules, this enzyme counteracts the toxicity associated with the formation of D-aminoacyl-tRNA entities in vivo and helps enforce protein L-homochirality. The chain is D-aminoacyl-tRNA deacylase from Stenotrophomonas maltophilia (strain R551-3).